Reading from the N-terminus, the 168-residue chain is uncharacterized protein (168 aa).

The segment covering 1 to 15 (MKRIISSSKSLKQLS) has biased composition (low complexity). The disordered stretch occupies residues 1-107 (MKRIISSSKS…NNNNNNNNNN (107 aa)). The span at 33–47 (SDSDSDSDSDSDSDS) shows a compositional bias: acidic residues. Positions 48–107 (DSNSNSNSNSNSNSNSNSNSNSNSNSNNNNNNTNNNNNNNNNNNNNNNNNNNNNNNNNNN) are enriched in low complexity.

This is an uncharacterized protein from Dictyostelium discoideum (Social amoeba).